The sequence spans 295 residues: CBY1-interacting BAR domain-containing protein 1 (295 aa).

The N-terminal 49 residues, 1–49 (MMSRTPDARARDTQTKQIQENITSVEKHFGDLCQLFAAYVRKTARLRDK), are a transit peptide targeting the mitochondrion. The tract at residues 12–222 (DTQTKQIQEN…NVDEEGDLEV (211 aa)) is BAR-like. Positions 111–185 (KREDLKQTQS…KQKIRDIKKV (75 aa)) form a coiled coil. The span at 243–265 (SKLSLNRTGTSMSKSGTMQSRTS) shows a compositional bias: polar residues. The tract at residues 243-295 (SKLSLNRTGTSMSKSGTMQSRTSSRQRKRDDEEDEEEDDEDEDDLEEVTDDEH) is disordered. Positions 273–295 (DEEDEEEDDEDEDDLEEVTDDEH) are enriched in acidic residues.

The protein belongs to the CIBAR family.

It localises to the cytoplasm. It is found in the cytoskeleton. Its subcellular location is the microtubule organizing center. The protein resides in the centrosome. The protein localises to the centriole. It localises to the cell projection. It is found in the cilium. Its subcellular location is the nucleus. The protein resides in the mitochondrion inner membrane. The protein localises to the flagellum. Functionally, plays a critical role in regulating mitochondrial ultrastructure and function by maintaining the integrity of mitochondrial morphology, particularly the organization of cristae. Plays a crucial role in ciliogenesis. Plays a key role in the correct positioning of the annulus, a septin-based ring structure in the sperm flagellum, serving both as a physical barrier and a membrane diffusion barrier that separates the midpiece (MP) from the principal piece (PP). This is CBY1-interacting BAR domain-containing protein 1 (cibar1) from Danio rerio (Zebrafish).